A 226-amino-acid polypeptide reads, in one-letter code: Probable transcriptional regulatory protein y4xI (226 aa).

The Response regulatory domain occupies 1 to 114; that stretch reads MRTLLVDTDL…ELIARMRALL (114 aa). A DNA-binding region (ompR/PhoB-type) is located at residues 122-220; it reads CPIIEFGNLH…VRGIGYTLEL (99 aa).

It localises to the cytoplasm. In Sinorhizobium fredii (strain NBRC 101917 / NGR234), this protein is Probable transcriptional regulatory protein y4xI.